Here is a 332-residue protein sequence, read N- to C-terminus: Putative integrase/recombinase y4rC (332 aa).

Residues Ala-5–Ala-98 form the Core-binding (CB) domain. Positions Thr-122–Ala-307 constitute a Tyr recombinase domain. Active-site residues include Arg-162, Lys-187, His-259, Arg-262, and His-285. Tyr-294 (O-(3'-phospho-DNA)-tyrosine intermediate) is an active-site residue.

It belongs to the 'phage' integrase family.

The polypeptide is Putative integrase/recombinase y4rC (Sinorhizobium fredii (strain NBRC 101917 / NGR234)).